A 101-amino-acid chain; its full sequence is Small ribosomal subunit protein uS14 (101 aa).

A compositionally biased stretch (basic and acidic residues) spans 1-10; the sequence is MAKKSSIEKN. The disordered stretch occupies residues 1-23; the sequence is MAKKSSIEKNNRRKKMTKNAAPK. Basic residues predominate over residues 11–23; it reads NRRKKMTKNAAPK.

It belongs to the universal ribosomal protein uS14 family. As to quaternary structure, part of the 30S ribosomal subunit. Contacts proteins S3 and S10.

Its function is as follows. Binds 16S rRNA, required for the assembly of 30S particles and may also be responsible for determining the conformation of the 16S rRNA at the A site. The sequence is that of Small ribosomal subunit protein uS14 from Rhodopseudomonas palustris (strain HaA2).